The chain runs to 461 residues: Elongation factor 1-alpha (461 aa).

N,N,N-trimethylglycine is present on glycine 2. Lysine 3 is modified (N6,N6-dimethyllysine; alternate). Lysine 3 carries the N6-methyllysine; alternate modification. The tr-type G domain occupies 6 to 241; it reads KTHINVVVIG…DSIEPPKRPT (236 aa). A G1 region spans residues 15–22; sequence GHVDSGKS. Residue 15 to 22 coordinates GTP; that stretch reads GHVDSGKS. Lysine 31 carries the N6-methyllysine modification. Positions 71–75 are G2; sequence GITID. Lysine 80 carries the N6,N6,N6-trimethyllysine modification. The interval 92–95 is G3; it reads DAPG. Residues 92-96 and 154-157 each bind GTP; these read DAPGH and NKMD. The tract at residues 154-157 is G4; the sequence is NKMD. Positions 193–195 are G5; sequence SGF. An N6,N6-dimethyllysine; alternate modification is found at lysine 317. An N6-methyllysine; alternate modification is found at lysine 317. N6-methyllysine is present on lysine 391.

It belongs to the TRAFAC class translation factor GTPase superfamily. Classic translation factor GTPase family. EF-Tu/EF-1A subfamily.

It is found in the cytoplasm. In terms of biological role, this protein promotes the GTP-dependent binding of aminoacyl-tRNA to the A-site of ribosomes during protein biosynthesis. The polypeptide is Elongation factor 1-alpha (TEF) (Pseudoechria curvicolla (Podospora curvicolla)).